The primary structure comprises 390 residues: LL-diaminopimelate aminotransferase (390 aa).

Residues tyrosine 13, glycine 38, lysine 102, tyrosine 126, and asparagine 176 each contribute to the substrate site. Residues 101–102 (SK), tyrosine 126, asparagine 176, tyrosine 207, and 235–237 (SVS) each bind pyridoxal 5'-phosphate. Lysine 238 is modified (N6-(pyridoxal phosphate)lysine). Arginine 246 is a pyridoxal 5'-phosphate binding site. Arginine 364 is a substrate binding site.

The protein belongs to the class-I pyridoxal-phosphate-dependent aminotransferase family. LL-diaminopimelate aminotransferase subfamily. In terms of assembly, homodimer. Pyridoxal 5'-phosphate serves as cofactor.

It carries out the reaction (2S,6S)-2,6-diaminopimelate + 2-oxoglutarate = (S)-2,3,4,5-tetrahydrodipicolinate + L-glutamate + H2O + H(+). It participates in amino-acid biosynthesis; L-lysine biosynthesis via DAP pathway; LL-2,6-diaminopimelate from (S)-tetrahydrodipicolinate (aminotransferase route): step 1/1. Functionally, involved in the synthesis of meso-diaminopimelate (m-DAP or DL-DAP), required for both lysine and peptidoglycan biosynthesis. Catalyzes the direct conversion of tetrahydrodipicolinate to LL-diaminopimelate. Is also able to catalyze the reverse reaction in vitro, i.e. the transamination of LL-diaminopimelate with 2-oxoglutarate to produce tetrahydrodipicolinate and glutamate. Can also use m-DAP instead of LL-DAP as the amino-group donor, and oxaloacetate instead of 2-oxoglutarate as the amino-group acceptor. The sequence is that of LL-diaminopimelate aminotransferase from Moorella thermoacetica (strain ATCC 39073 / JCM 9320).